The chain runs to 322 residues: Serine/threonine-protein phosphatase PP1 isozyme 6 (322 aa).

Met-1 is subject to N-acetylmethionine. Positions 61, 63, 89, and 121 each coordinate Mn(2+). His-122 (proton donor) is an active-site residue. 2 residues coordinate Mn(2+): His-170 and His-245. Positions 303 to 322 (GFNNNVPRPGTPPHKGGKGR) are disordered.

Belongs to the PPP phosphatase family. PP-1 subfamily. Requires Mn(2+) as cofactor. Strongly up-regulated within developing flowers, especially in the tapetum, the developing and mature pollen and in the ovaries.

It is found in the nucleus. The protein resides in the cytoplasm. The catalysed reaction is O-phospho-L-seryl-[protein] + H2O = L-seryl-[protein] + phosphate. It catalyses the reaction O-phospho-L-threonyl-[protein] + H2O = L-threonyl-[protein] + phosphate. With respect to regulation, phosphatase activity is strongly reduced by the protein phosphatase inhibitor 2 (I-2). Serine/threonine-protein phosphatase that possesses phosphatase activity toward para-nitrophenyl phosphate (pNPP) in vitro. This chain is Serine/threonine-protein phosphatase PP1 isozyme 6, found in Arabidopsis thaliana (Mouse-ear cress).